The following is a 90-amino-acid chain: Small ribosomal subunit protein uS15 (90 aa).

Belongs to the universal ribosomal protein uS15 family. As to quaternary structure, part of the 30S ribosomal subunit. Forms a bridge to the 50S subunit in the 70S ribosome, contacting the 23S rRNA.

Its function is as follows. One of the primary rRNA binding proteins, it binds directly to 16S rRNA where it helps nucleate assembly of the platform of the 30S subunit by binding and bridging several RNA helices of the 16S rRNA. Functionally, forms an intersubunit bridge (bridge B4) with the 23S rRNA of the 50S subunit in the ribosome. The chain is Small ribosomal subunit protein uS15 from Helicobacter pylori (strain J99 / ATCC 700824) (Campylobacter pylori J99).